The primary structure comprises 140 residues: Hexon-interlacing protein (140 aa).

Positions 100–127 (LTALLAQLDSLTRELNVVSQQLLDLRQQ) form a coiled coil.

This sequence belongs to the adenoviridae hexon-interlacing protein family. In terms of assembly, homotrimer. Interacts with hexon protein; this interaction tethers the hexons together. Self-interacts with adjacent proteins. Interacts with kinesin light chain KLC1; this interaction leads to capsid disruption at the nuclear pore complex during virus entry into host cell.

The protein resides in the virion. The protein localises to the host nucleus. Structural component of the virion that acts as a cement protein on the capsid exterior and forms triskelion structures consisting of three molecules that stabilize three hexon trimers at the center of each icosahedral facet and fixes the peripentonal hexons. Dispensable for assembly. During virus entry, recruits the anterograde motor kinesin-1 to the capsid docked at the nuclear pore complex thereby subjecting the docked capsid to a pulling force. The resulting tension leads to capsid disruption, dispersion of capsid fragments toward cell periphery and eventually viral DNA entry into the host nucleus. The protein is Hexon-interlacing protein of Human adenovirus C serotype 5 (HAdV-5).